Consider the following 604-residue polypeptide: UvrABC system protein C (604 aa).

The region spanning 14-91 (ESPGVYRMLD…IKEQRPPYNI (78 aa)) is the GIY-YIG domain. The UVR domain occupies 202–237 (EQVTAQLTRDMETASQALDFEEAARLRDQIQQLRRL). A disordered region spans residues 538–557 (GHRQQRDKQRRTSTLQDIPG).

Belongs to the UvrC family. In terms of assembly, interacts with UvrB in an incision complex.

The protein localises to the cytoplasm. In terms of biological role, the UvrABC repair system catalyzes the recognition and processing of DNA lesions. UvrC both incises the 5' and 3' sides of the lesion. The N-terminal half is responsible for the 3' incision and the C-terminal half is responsible for the 5' incision. This chain is UvrABC system protein C, found in Chromohalobacter salexigens (strain ATCC BAA-138 / DSM 3043 / CIP 106854 / NCIMB 13768 / 1H11).